The primary structure comprises 173 residues: Adenine phosphoribosyltransferase (173 aa).

This sequence belongs to the purine/pyrimidine phosphoribosyltransferase family. In terms of assembly, homodimer.

It is found in the cytoplasm. The catalysed reaction is AMP + diphosphate = 5-phospho-alpha-D-ribose 1-diphosphate + adenine. It functions in the pathway purine metabolism; AMP biosynthesis via salvage pathway; AMP from adenine: step 1/1. Its function is as follows. Catalyzes a salvage reaction resulting in the formation of AMP, that is energically less costly than de novo synthesis. In Macrococcus caseolyticus (strain JCSC5402) (Macrococcoides caseolyticum), this protein is Adenine phosphoribosyltransferase.